Consider the following 129-residue polypeptide: Glycine cleavage system H protein (129 aa).

In terms of domain architecture, Lipoyl-binding spans 23 to 104 (TVTVGITQHA…SYSAWLFKLK (82 aa)). Position 64 is an N6-lipoyllysine (Lys64).

This sequence belongs to the GcvH family. In terms of assembly, the glycine cleavage system is composed of four proteins: P, T, L and H. The cofactor is (R)-lipoate.

Its function is as follows. The glycine cleavage system catalyzes the degradation of glycine. The H protein shuttles the methylamine group of glycine from the P protein to the T protein. This chain is Glycine cleavage system H protein, found in Nitrosomonas eutropha (strain DSM 101675 / C91 / Nm57).